Consider the following 261-residue polypeptide: Cytochrome c oxidase subunit 3 (261 aa).

Topologically, residues 1–15 (MTHQTHSYHMVNPSP) are mitochondrial matrix. A helical membrane pass occupies residues 16–34 (WPLTGALSALLMTSGLIMW). At 35 to 40 (FHFNSM) the chain is on the mitochondrial intermembrane side. Residues 41–66 (ILLTLGLSTNILTMYQWWRDIIREST) form a helical membrane-spanning segment. At 67–72 (FQGHHT) the chain is on the mitochondrial matrix side. The chain crosses the membrane as a helical span at residues 73-105 (PTVQKGLRYGMILFIVSEVLFFTGFFWAFYHSS). Topologically, residues 106–128 (LAPTPELGGCWPPTGIHPLNPLE) are mitochondrial intermembrane. The helical transmembrane segment at 129–152 (VPLLNTSVLLASGVSITWAHHSLM) threads the bilayer. The Mitochondrial matrix portion of the chain corresponds to 153-155 (EGN). A helical transmembrane segment spans residues 156-183 (RKHMLQALFITIALGLYFTLLQASEYYE). The Mitochondrial intermembrane portion of the chain corresponds to 184 to 190 (APFTISD). A helical transmembrane segment spans residues 191–223 (GIYGSTFFVATGFHGLHVIIGSTFLIVCFLRQV). Residues 224-232 (KFHFTSNHH) are Mitochondrial matrix-facing. The chain crosses the membrane as a helical span at residues 233–256 (FGFERAAWYWHFVDVVWLFLYVSI). Residues 257–261 (YWWGS) are Mitochondrial intermembrane-facing.

This sequence belongs to the cytochrome c oxidase subunit 3 family. In terms of assembly, component of the cytochrome c oxidase (complex IV, CIV), a multisubunit enzyme composed of 14 subunits. The complex is composed of a catalytic core of 3 subunits MT-CO1, MT-CO2 and MT-CO3, encoded in the mitochondrial DNA, and 11 supernumerary subunits COX4I, COX5A, COX5B, COX6A, COX6B, COX6C, COX7A, COX7B, COX7C, COX8 and NDUFA4, which are encoded in the nuclear genome. The complex exists as a monomer or a dimer and forms supercomplexes (SCs) in the inner mitochondrial membrane with NADH-ubiquinone oxidoreductase (complex I, CI) and ubiquinol-cytochrome c oxidoreductase (cytochrome b-c1 complex, complex III, CIII), resulting in different assemblies (supercomplex SCI(1)III(2)IV(1) and megacomplex MCI(2)III(2)IV(2)).

The protein resides in the mitochondrion inner membrane. It carries out the reaction 4 Fe(II)-[cytochrome c] + O2 + 8 H(+)(in) = 4 Fe(III)-[cytochrome c] + 2 H2O + 4 H(+)(out). Functionally, component of the cytochrome c oxidase, the last enzyme in the mitochondrial electron transport chain which drives oxidative phosphorylation. The respiratory chain contains 3 multisubunit complexes succinate dehydrogenase (complex II, CII), ubiquinol-cytochrome c oxidoreductase (cytochrome b-c1 complex, complex III, CIII) and cytochrome c oxidase (complex IV, CIV), that cooperate to transfer electrons derived from NADH and succinate to molecular oxygen, creating an electrochemical gradient over the inner membrane that drives transmembrane transport and the ATP synthase. Cytochrome c oxidase is the component of the respiratory chain that catalyzes the reduction of oxygen to water. Electrons originating from reduced cytochrome c in the intermembrane space (IMS) are transferred via the dinuclear copper A center (CU(A)) of subunit 2 and heme A of subunit 1 to the active site in subunit 1, a binuclear center (BNC) formed by heme A3 and copper B (CU(B)). The BNC reduces molecular oxygen to 2 water molecules using 4 electrons from cytochrome c in the IMS and 4 protons from the mitochondrial matrix. The polypeptide is Cytochrome c oxidase subunit 3 (MT-CO3) (Balaenoptera musculus (Blue whale)).